The sequence spans 300 residues: Inosose dehydratase (300 aa).

The protein belongs to the IolE/MocC family. Requires glutathione as cofactor. Co(2+) is required as a cofactor. It depends on Mn(2+) as a cofactor.

It carries out the reaction scyllo-inosose = 3D-3,5/4-trihydroxycyclohexane-1,2-dione + H2O. Its pathway is polyol metabolism; myo-inositol degradation into acetyl-CoA; acetyl-CoA from myo-inositol: step 2/7. Its function is as follows. Catalyzes the dehydration of inosose (2-keto-myo-inositol, 2KMI or 2,4,6/3,5-pentahydroxycyclohexanone) to 3D-(3,5/4)-trihydroxycyclohexane-1,2-dione (D-2,3-diketo-4-deoxy-epi-inositol). This chain is Inosose dehydratase, found in Lactiplantibacillus plantarum (strain ATCC BAA-793 / NCIMB 8826 / WCFS1) (Lactobacillus plantarum).